A 641-amino-acid chain; its full sequence is Epithelial sodium channel subunit beta (641 aa).

Topologically, residues 1–50 are cytoplasmic; it reads MHVKKYLLKGLHRLQKGPGYTYKELLVWYCDNTNTHGPKRIICEGPKKKA. A helical transmembrane segment spans residues 51 to 71; that stretch reads MWFVLTLLFTSLVCWQWGLFI. Residues 72 to 533 are Extracellular-facing; it reads KTYLNWEVSV…GGQFGFWMGG (462 aa). 9 cysteine pairs are disulfide-bonded: Cys98–Cys273, Cys185–Cys190, Cys197–Cys204, Cys250–Cys257, Cys362–Cys449, Cys387–Cys445, Cys391–Cys441, Cys400–Cys427, and Cys402–Cys416. An N-linked (GlcNAc...) asparagine glycan is attached at Asn141. The N-linked (GlcNAc...) asparagine glycan is linked to Asn379. A helical membrane pass occupies residues 534–554; the sequence is SVLCLIEFGEIIIDFVWITII. The Cytoplasmic portion of the chain corresponds to 555–641; the sequence is KLVALAKSVR…IESDSEGDAI (87 aa). The interval 597–624 is disordered; sequence TPGPDVEAYPHEQNPPIPGTPPPNYDSL. Over residues 609–620 the composition is skewed to pro residues; sequence QNPPIPGTPPPN. The short motif at 617 to 621 is the PY motif; recruits WW domain-containing proteins and is thereby required for ubiquitination and inhibition of the channel by NEDD4 and NEDD4L element; that stretch reads PPPNY. Residues Ser634 and Ser636 each carry the phosphoserine modification.

The protein belongs to the amiloride-sensitive sodium channel (TC 1.A.6) family. SCNN1B subfamily. As to quaternary structure, component of the heterotrimeric epithelial sodium channel (ENaC) composed of an alpha/SCNN1A, a beta/SCNN1B and a gamma/SCNN1G subunit. An additional delta/SCNN1D subunit can replace the alpha/SCNN1A subunit to form an alternative channel with specific properties. Interacts with WWP1 (via WW domains). Interacts with WWP2 (via WW domains); inhibits the channel. Interacts with the full-length immature form of PCSK9 (pro-PCSK9). Interacts (N-glycosylated) with BPIFA1; the interaction is direct and inhibits the proteolytic processing of SCNN1A and SCNN1G and the activation of ENaC. In terms of processing, ubiquitinated. Can be ubiquitinated at multiple sites and undergo monoubiquitination and polyubiquitination. Ubiquitination by NEDD4 or NEDD4L inhibits the ENaC channel through endocytosis, intracellular retention and degradation of its individual subunits. However, some studies could not confirm the ubiquitination of this subunit of the ENaC. Post-translationally, phosphorylated on serine and threonine residues. Aldosterone and insulin increase the basal level of phosphorylation. N-glycosylated. N-glycosylation is required for interaction with BPIFA1.

It localises to the apical cell membrane. The protein localises to the cytoplasmic vesicle membrane. It carries out the reaction Na(+)(in) = Na(+)(out). With respect to regulation, originally identified and characterized by its inhibition by the diuretic drug amiloride. Its function is as follows. This is one of the three pore-forming subunits of the heterotrimeric epithelial sodium channel (ENaC), a critical regulator of sodium balance and fluid homeostasis. ENaC operates in epithelial tissues, where it mediates the electrodiffusion of sodium ions from extracellular fluid through the apical membrane of cells, with water following osmotically. It plays a key role in maintaining sodium homeostasis through electrogenic sodium reabsorption in the kidneys. Additionally, ENaC is essential for airway surface liquid homeostasis, which is crucial for proper mucus clearance. This is Epithelial sodium channel subunit beta from Bos taurus (Bovine).